The primary structure comprises 396 residues: L-lactate dehydrogenase (396 aa).

The FMN hydroxy acid dehydrogenase domain maps to 1-380; that stretch reads MIISAASDYR…TQDSLVQGLG (380 aa). Tyrosine 24 lines the substrate pocket. Positions 106 and 127 each coordinate FMN. Residue tyrosine 129 coordinates substrate. Threonine 155 contributes to the FMN binding site. Arginine 164 is a binding site for substrate. Lysine 251 serves as a coordination point for FMN. Histidine 275 acts as the Proton acceptor in catalysis. Arginine 278 is a binding site for substrate. 306-330 serves as a coordination point for FMN; sequence DSGIRNGLDVVRMIALGADTVLLGR.

The protein belongs to the FMN-dependent alpha-hydroxy acid dehydrogenase family. FMN serves as cofactor.

Its subcellular location is the cell inner membrane. The enzyme catalyses (S)-lactate + A = pyruvate + AH2. Functionally, catalyzes the conversion of L-lactate to pyruvate. Is coupled to the respiratory chain. This Escherichia coli O127:H6 (strain E2348/69 / EPEC) protein is L-lactate dehydrogenase.